The chain runs to 515 residues: Glucose-6-phosphate 1-dehydrogenase (515 aa).

Ala2 carries the N-acetylalanine modification. A Phosphoserine modification is found at Ser8. A Phosphothreonine modification is found at Thr10. NADP(+)-binding positions include 38 to 45 (GASGDLAK) and Arg72. Lys89 carries the post-translational modification N6-acetyllysine. NADP(+) contacts are provided by Tyr147 and Lys171. D-glucose 6-phosphate is bound by residues Lys171, 201–205 (HYLGK), Glu239, and Asp258. Lys171 carries the post-translational modification N6-(2-hydroxyisobutyryl)lysine; alternate. Lys171 is modified (N6-acetyllysine; alternate). The Proton acceptor role is filled by His263. Arg357 serves as a coordination point for NADP(+). Residues Lys360 and Arg365 each contribute to the D-glucose 6-phosphate site. NADP(+)-binding residues include Lys366, Arg370, and Arg393. A D-glucose 6-phosphate-binding site is contributed by Gln395. NADP(+) contacts are provided by residues 401–403 (YTK) and 421–423 (DLT). Residue Lys403 is modified to N6-acetyllysine. The residue at position 432 (Lys432) is an N6-acetyllysine. Arg487 contacts NADP(+). Position 497 is an N6-acetyllysine (Lys497). NADP(+)-binding residues include Tyr503 and Trp509. Phosphotyrosine is present on Tyr503.

This sequence belongs to the glucose-6-phosphate dehydrogenase family. Homotetramer; dimer of dimers. Interacts with SIRT2; the interaction is enhanced by H(2)O(2) treatment. Forms a ternary complex with ALDOB and TP53; this interaction is direct. ALDOB stabilizes the complex inhibiting G6PD activity and keeping oxidative pentose phosphate metabolism in check. Acetylated by ELP3 at Lys-403; acetylation inhibits its homodimerization and enzyme activity. Deacetylated by SIRT2 at Lys-403; deacetylation stimulates its enzyme activity.

It is found in the cytoplasm. The protein resides in the cytosol. It localises to the membrane. It carries out the reaction D-glucose 6-phosphate + NADP(+) = 6-phospho-D-glucono-1,5-lactone + NADPH + H(+). It functions in the pathway carbohydrate degradation; pentose phosphate pathway; D-ribulose 5-phosphate from D-glucose 6-phosphate (oxidative stage): step 1/3. In terms of biological role, cytosolic glucose-6-phosphate dehydrogenase that catalyzes the first and rate-limiting step of the oxidative branch within the pentose phosphate pathway/shunt, an alternative route to glycolysis for the dissimilation of carbohydrates and a major source of reducing power and metabolic intermediates for fatty acid and nucleic acid biosynthetic processes. This chain is Glucose-6-phosphate 1-dehydrogenase (G6pdx), found in Rattus norvegicus (Rat).